The sequence spans 206 residues: Ion-translocating oxidoreductase complex subunit G (206 aa).

Residues 9–29 traverse the membrane as a helical segment; sequence GITLALFAAGSTGLTAVINQM. T174 is subject to FMN phosphoryl threonine.

It belongs to the RnfG family. As to quaternary structure, the complex is composed of six subunits: RsxA, RsxB, RsxC, RsxD, RsxE and RsxG. FMN serves as cofactor.

The protein resides in the cell inner membrane. In terms of biological role, part of a membrane-bound complex that couples electron transfer with translocation of ions across the membrane. Required to maintain the reduced state of SoxR. In Salmonella typhimurium (strain LT2 / SGSC1412 / ATCC 700720), this protein is Ion-translocating oxidoreductase complex subunit G.